The sequence spans 264 residues: Glutamate racemase (264 aa).

Residues 10-11 (DS) and 42-43 (YG) each bind substrate. The Proton donor/acceptor role is filled by cysteine 73. A substrate-binding site is contributed by 74–75 (NT). Cysteine 183 functions as the Proton donor/acceptor in the catalytic mechanism. 184 to 185 (TH) contacts substrate.

This sequence belongs to the aspartate/glutamate racemases family.

It carries out the reaction L-glutamate = D-glutamate. It participates in cell wall biogenesis; peptidoglycan biosynthesis. Provides the (R)-glutamate required for cell wall biosynthesis. This is Glutamate racemase from Streptococcus suis (strain 98HAH33).